A 113-amino-acid chain; its full sequence is Fruiting body-specific class I hydrophobin fbh1 (113 aa).

Positions 1–23 (MFSIRIATVVLAASAALRPPARI) are cleaved as a signal peptide. Cystine bridges form between C33–C92, C40–C86, C41–C73, and C93–C106.

The protein belongs to the fungal hydrophobin family. As to quaternary structure, self-assembles to form functional amyloid fibrils called rodlets. Self-assembly into fibrillar rodlets occurs spontaneously at hydrophobic:hydrophilic interfaces and the rodlets further associate laterally to form amphipathic monolayers.

It localises to the secreted. Its subcellular location is the cell wall. Functionally, aerial growth, conidiation, and dispersal of filamentous fungi in the environment rely upon a capability of their secreting small amphipathic proteins called hydrophobins (HPBs) with low sequence identity. Class I can self-assemble into an outermost layer of rodlet bundles on aerial cell surfaces, conferring cellular hydrophobicity that supports fungal growth, development and dispersal; whereas Class II form highly ordered films at water-air interfaces through intermolecular interactions but contribute nothing to the rodlet structure. Fbh1 is a fruiting body-specific class I hydrophobin that is involved in the growth rate and primordia formation. The chain is Fruiting body-specific class I hydrophobin fbh1 from Pleurotus ostreatus (Oyster mushroom).